A 261-amino-acid chain; its full sequence is tRNA pseudouridine synthase A 2 (261 aa).

The active-site Nucleophile is aspartate 59. Residue tyrosine 117 coordinates substrate.

Belongs to the tRNA pseudouridine synthase TruA family. In terms of assembly, homodimer.

It carries out the reaction uridine(38/39/40) in tRNA = pseudouridine(38/39/40) in tRNA. Functionally, formation of pseudouridine at positions 38, 39 and 40 in the anticodon stem and loop of transfer RNAs. This Desulfotalea psychrophila (strain LSv54 / DSM 12343) protein is tRNA pseudouridine synthase A 2.